We begin with the raw amino-acid sequence, 260 residues long: Pyridoxine 5'-phosphate synthase (260 aa).

3-amino-2-oxopropyl phosphate is bound at residue Asn-15. Residue 17 to 18 coordinates 1-deoxy-D-xylulose 5-phosphate; it reads DH. Arg-26 is a 3-amino-2-oxopropyl phosphate binding site. His-51 acts as the Proton acceptor in catalysis. 1-deoxy-D-xylulose 5-phosphate contacts are provided by Arg-53 and His-58. Glu-78 acts as the Proton acceptor in catalysis. A 1-deoxy-D-xylulose 5-phosphate-binding site is contributed by Thr-108. The active-site Proton donor is the His-199. Residues Gly-200 and 221-222 contribute to the 3-amino-2-oxopropyl phosphate site; that span reads GH.

This sequence belongs to the PNP synthase family. Homooctamer; tetramer of dimers.

The protein resides in the cytoplasm. It catalyses the reaction 3-amino-2-oxopropyl phosphate + 1-deoxy-D-xylulose 5-phosphate = pyridoxine 5'-phosphate + phosphate + 2 H2O + H(+). It participates in cofactor biosynthesis; pyridoxine 5'-phosphate biosynthesis; pyridoxine 5'-phosphate from D-erythrose 4-phosphate: step 5/5. Its function is as follows. Catalyzes the complicated ring closure reaction between the two acyclic compounds 1-deoxy-D-xylulose-5-phosphate (DXP) and 3-amino-2-oxopropyl phosphate (1-amino-acetone-3-phosphate or AAP) to form pyridoxine 5'-phosphate (PNP) and inorganic phosphate. This Cupriavidus necator (strain ATCC 17699 / DSM 428 / KCTC 22496 / NCIMB 10442 / H16 / Stanier 337) (Ralstonia eutropha) protein is Pyridoxine 5'-phosphate synthase.